The following is a 231-amino-acid chain: Protein OPG061 (231 aa).

It belongs to the orthopoxvirus OPG058 family.

The protein localises to the host nucleus. Its subcellular location is the host nucleolus. This is Protein OPG061 (OPG061) from Cynomys gunnisoni (Gunnison's prairie dog).